A 329-amino-acid chain; its full sequence is Biotin synthase (329 aa).

Positions 46–275 (FFGRRLKLVR…LNPKAELRAS (230 aa)) constitute a Radical SAM core domain. [4Fe-4S] cluster is bound by residues Cys-64, Cys-68, and Cys-71. Positions 108, 140, 200, and 273 each coordinate [2Fe-2S] cluster.

Belongs to the radical SAM superfamily. Biotin synthase family. Homodimer. It depends on [4Fe-4S] cluster as a cofactor. [2Fe-2S] cluster serves as cofactor.

It catalyses the reaction (4R,5S)-dethiobiotin + (sulfur carrier)-SH + 2 reduced [2Fe-2S]-[ferredoxin] + 2 S-adenosyl-L-methionine = (sulfur carrier)-H + biotin + 2 5'-deoxyadenosine + 2 L-methionine + 2 oxidized [2Fe-2S]-[ferredoxin]. It participates in cofactor biosynthesis; biotin biosynthesis; biotin from 7,8-diaminononanoate: step 2/2. Catalyzes the conversion of dethiobiotin (DTB) to biotin by the insertion of a sulfur atom into dethiobiotin via a radical-based mechanism. In Thermus thermophilus (strain ATCC 27634 / DSM 579 / HB8), this protein is Biotin synthase.